A 73-amino-acid chain; its full sequence is Large ribosomal subunit protein bL31 (73 aa).

This sequence belongs to the bacterial ribosomal protein bL31 family. Type A subfamily. In terms of assembly, part of the 50S ribosomal subunit.

Its function is as follows. Binds the 23S rRNA. The polypeptide is Large ribosomal subunit protein bL31 (Bartonella bacilliformis (strain ATCC 35685 / KC583 / Herrer 020/F12,63)).